The chain runs to 344 residues: Ferrochelatase (344 aa).

Positions 190 and 270 each coordinate Fe cation.

This sequence belongs to the ferrochelatase family.

The protein resides in the cytoplasm. It carries out the reaction heme b + 2 H(+) = protoporphyrin IX + Fe(2+). It participates in porphyrin-containing compound metabolism; protoheme biosynthesis; protoheme from protoporphyrin-IX: step 1/1. In terms of biological role, catalyzes the ferrous insertion into protoporphyrin IX. The chain is Ferrochelatase from Rickettsia felis (strain ATCC VR-1525 / URRWXCal2) (Rickettsia azadi).